The sequence spans 157 residues: Protein FAM219A (157 aa).

Methionine 1 bears the N-acetylmethionine mark. Residues 1 to 103 form a disordered region; it reads MMEEIDRFQD…SRYSSSGYSS (103 aa). Positions 17-33 are enriched in basic and acidic residues; that stretch reads SDRDCDAREEKQRELAR. A compositionally biased stretch (polar residues) spans 38 to 52; the sequence is KNGSMGSPVNQQPKK. 2 positions are modified to phosphoserine: serine 44 and serine 74. Threonine 85 carries the phosphothreonine modification. A phosphoserine mark is found at serine 87 and serine 94. Residues 94-103 show a composition bias toward low complexity; the sequence is SRYSSSGYSS.

Belongs to the FAM219 family.

The protein is Protein FAM219A (Fam219a) of Mus musculus (Mouse).